A 333-amino-acid polypeptide reads, in one-letter code: Probable tRNA pseudouridine synthase B (333 aa).

Catalysis depends on Asp66, which acts as the Nucleophile. One can recognise a PUA domain in the interval 233–308; it reads LKKIIVKDSA…EVVEITRVIM (76 aa).

The protein belongs to the pseudouridine synthase TruB family. Type 2 subfamily.

It carries out the reaction uridine(55) in tRNA = pseudouridine(55) in tRNA. Its function is as follows. Could be responsible for synthesis of pseudouridine from uracil-55 in the psi GC loop of transfer RNAs. In Methanococcus maripaludis (strain C7 / ATCC BAA-1331), this protein is Probable tRNA pseudouridine synthase B.